We begin with the raw amino-acid sequence, 395 residues long: Scyllo-inosose 3-dehydrogenase (395 aa).

A Zn(2+)-binding site is contributed by cysteine 66. Active-site charge relay system residues include serine 68 and histidine 71. Residues histidine 95, glutamate 96, cysteine 131, cysteine 134, cysteine 137, cysteine 145, and glutamate 193 each coordinate Zn(2+). NAD(+) contacts are provided by isoleucine 223, glutamate 243, and arginine 248.

It belongs to the zinc-containing alcohol dehydrogenase family. Homodimer. Requires Zn(2+) as cofactor.

The catalysed reaction is scyllo-inosose + NAD(+) = 3-dehydro-scyllo-inosose + NADH + H(+). The protein operates within polyol metabolism; myo-inositol metabolism. In terms of biological role, catalyzes the NAD(+)-dependent oxidation of scyllo-inosose (2-keto-myo-inositol) to 3-dehydro-scyllo-inosose (diketo-inositol), and thus probably functions in a myo-inositol degradation pathway together with IolG, IolN and IolO. Has no activity on myo-inositol, D-chiro-inositol and 1-keto-D-chiro-inositol. This Thermotoga maritima (strain ATCC 43589 / DSM 3109 / JCM 10099 / NBRC 100826 / MSB8) protein is Scyllo-inosose 3-dehydrogenase.